The chain runs to 261 residues: Cytochrome c oxidase subunit 2 (261 aa).

The Mitochondrial intermembrane segment spans residues 1–34; sequence MSFTGIFHFFTNSPCDAAEPWQLGSQDAATPMMQ. The helical transmembrane segment at 35–55 threads the bilayer; that stretch reads GIIDLHHDIFFFLILILVFVS. At 56-87 the chain is on the mitochondrial matrix side; that stretch reads RILVRALWHFHSKKNPIPQRIVHGTTIEILRT. A helical transmembrane segment spans residues 88-108; sequence IFPSIIPMFIAIPSFALLYSM. The Mitochondrial intermembrane segment spans residues 109-261; it reads DEVVVDPAMT…NQLIPQTGEA (153 aa). Cu cation-binding residues include H188, C223, E225, C227, and H231. A Mg(2+)-binding site is contributed by E225.

The protein belongs to the cytochrome c oxidase subunit 2 family. In terms of assembly, component of the cytochrome c oxidase (complex IV, CIV), a multisubunit enzyme composed of a catalytic core of 3 subunits and several supernumerary subunits. The complex exists as a monomer or a dimer and forms supercomplexes (SCs) in the inner mitochondrial membrane with ubiquinol-cytochrome c oxidoreductase (cytochrome b-c1 complex, complex III, CIII). The cofactor is Cu cation.

Its subcellular location is the mitochondrion inner membrane. It catalyses the reaction 4 Fe(II)-[cytochrome c] + O2 + 8 H(+)(in) = 4 Fe(III)-[cytochrome c] + 2 H2O + 4 H(+)(out). Component of the cytochrome c oxidase, the last enzyme in the mitochondrial electron transport chain which drives oxidative phosphorylation. The respiratory chain contains 3 multisubunit complexes succinate dehydrogenase (complex II, CII), ubiquinol-cytochrome c oxidoreductase (cytochrome b-c1 complex, complex III, CIII) and cytochrome c oxidase (complex IV, CIV), that cooperate to transfer electrons derived from NADH and succinate to molecular oxygen, creating an electrochemical gradient over the inner membrane that drives transmembrane transport and the ATP synthase. Cytochrome c oxidase is the component of the respiratory chain that catalyzes the reduction of oxygen to water. Electrons originating from reduced cytochrome c in the intermembrane space (IMS) are transferred via the dinuclear copper A center (CU(A)) of subunit 2 and heme A of subunit 1 to the active site in subunit 1, a binuclear center (BNC) formed by heme A3 and copper B (CU(B)). The BNC reduces molecular oxygen to 2 water molecules using 4 electrons from cytochrome c in the IMS and 4 protons from the mitochondrial matrix. The chain is Cytochrome c oxidase subunit 2 (COX2) from Daucus carota (Wild carrot).